The chain runs to 339 residues: Beta-ketoacyl-[acyl-carrier-protein] synthase III (339 aa).

Active-site residues include cysteine 119 and histidine 262. The ACP-binding stretch occupies residues 263–267 (QANQR). Residue asparagine 292 is part of the active site.

It belongs to the thiolase-like superfamily. FabH family. In terms of assembly, homodimer.

Its subcellular location is the cytoplasm. It catalyses the reaction malonyl-[ACP] + acetyl-CoA + H(+) = 3-oxobutanoyl-[ACP] + CO2 + CoA. It functions in the pathway lipid metabolism; fatty acid biosynthesis. Functionally, catalyzes the condensation reaction of fatty acid synthesis by the addition to an acyl acceptor of two carbons from malonyl-ACP. Catalyzes the first condensation reaction which initiates fatty acid synthesis and may therefore play a role in governing the total rate of fatty acid production. Possesses both acetoacetyl-ACP synthase and acetyl transacylase activities. Its substrate specificity determines the biosynthesis of branched-chain and/or straight-chain of fatty acids. This chain is Beta-ketoacyl-[acyl-carrier-protein] synthase III, found in Prochlorococcus marinus (strain MIT 9313).